The primary structure comprises 373 residues: Cathecol O-methyltransferase 1 (373 aa).

S-adenosyl-L-homocysteine-binding residues include G209, D232, D252, M253, M265, and K266. An S-adenosyl-L-methionine-binding site is contributed by D232. The active-site Proton acceptor is the H279.

This sequence belongs to the class I-like SAM-binding methyltransferase superfamily. Cation-independent O-methyltransferase family. COMT subfamily.

It carries out the reaction catechol + S-adenosyl-L-methionine = guaiacol + S-adenosyl-L-homocysteine + H(+). Functionally, O-methyltransferase that catalyzes the conversion of catechol to guaiacol. Involved in the production of guaiacol in fruits. This Solanum lycopersicum (Tomato) protein is Cathecol O-methyltransferase 1.